The primary structure comprises 312 residues: MANRTVKDAHSVHGTNPQYLVEKIIRTRIYESKYWKEECFGLTAELVVDKAMELKFVGGVYGGNIKPTPFLCLTLKMLQIQPEKDIIVEFIKNEDFKYVRALGALYMRLTGTATDCYKYLEPLYNDYRKVKVQNRDGEFELMHVDEFIDQLLHEERVCDVILPRLQKRFVLEETEQLDPRVSALEEDMDDVESSEEEEDDDEKGRDPSPEHHRRNYRDLDRPRRSPSPRYRRSRSRSPRRRSRSPKRRSPSPPRRERHRSKSPRRHRSRSRERRHRSKSKSPGHHRSHRHRSHSKSPERSKKSHKKSRRGNE.

The N-terminal protein interaction domain stretch occupies residues 1 to 179 (MANRTVKDAH…VLEETEQLDP (179 aa)). A disordered region spans residues 180–312 (RVSALEEDMD…SHKKSRRGNE (133 aa)). Residues 184–201 (LEEDMDDVESSEEEEDDD) show a composition bias toward acidic residues. A compositionally biased stretch (basic and acidic residues) spans 202–223 (EKGRDPSPEHHRRNYRDLDRPR). Composition is skewed to basic residues over residues 224-294 (RSPS…RSHS) and 301-312 (KKSHKKSRRGNE).

This sequence belongs to the PRP38 family. In terms of assembly, component of the spliceosome B complex.

It is found in the nucleus. Functionally, involved in pre-mRNA splicing as a component of the spliceosome. The chain is Pre-mRNA-splicing factor 38A (prpf38a) from Xenopus laevis (African clawed frog).